The chain runs to 777 residues: Phosphoribosylformylglycinamidine synthase subunit PurL (777 aa).

Histidine 50 is an active-site residue. Residues tyrosine 53 and lysine 92 each coordinate ATP. A Mg(2+)-binding site is contributed by glutamate 94. Substrate-binding positions include 95–98 (SHNH) and arginine 117. Histidine 96 serves as the catalytic Proton acceptor. Residue aspartate 118 participates in Mg(2+) binding. Residue glutamine 241 coordinates substrate. Aspartate 269 is a Mg(2+) binding site. 313–315 (ESQ) lines the substrate pocket. ATP contacts are provided by aspartate 520 and glycine 557. Residue asparagine 558 coordinates Mg(2+). Serine 560 provides a ligand contact to substrate.

This sequence belongs to the FGAMS family. As to quaternary structure, monomer. Part of the FGAM synthase complex composed of 1 PurL, 1 PurQ and 2 PurS subunits.

It is found in the cytoplasm. It catalyses the reaction N(2)-formyl-N(1)-(5-phospho-beta-D-ribosyl)glycinamide + L-glutamine + ATP + H2O = 2-formamido-N(1)-(5-O-phospho-beta-D-ribosyl)acetamidine + L-glutamate + ADP + phosphate + H(+). Its pathway is purine metabolism; IMP biosynthesis via de novo pathway; 5-amino-1-(5-phospho-D-ribosyl)imidazole from N(2)-formyl-N(1)-(5-phospho-D-ribosyl)glycinamide: step 1/2. Its function is as follows. Part of the phosphoribosylformylglycinamidine synthase complex involved in the purines biosynthetic pathway. Catalyzes the ATP-dependent conversion of formylglycinamide ribonucleotide (FGAR) and glutamine to yield formylglycinamidine ribonucleotide (FGAM) and glutamate. The FGAM synthase complex is composed of three subunits. PurQ produces an ammonia molecule by converting glutamine to glutamate. PurL transfers the ammonia molecule to FGAR to form FGAM in an ATP-dependent manner. PurS interacts with PurQ and PurL and is thought to assist in the transfer of the ammonia molecule from PurQ to PurL. The protein is Phosphoribosylformylglycinamidine synthase subunit PurL of Trichormus variabilis (strain ATCC 29413 / PCC 7937) (Anabaena variabilis).